Reading from the N-terminus, the 445-residue chain is Argininosuccinate synthase (445 aa).

ATP is bound by residues 17 to 25 (AFSGGLDTS) and alanine 43. Tyrosine 99 lines the L-citrulline pocket. ATP contacts are provided by glycine 129 and threonine 131. L-aspartate-binding residues include threonine 131, asparagine 135, and aspartate 136. Residue asparagine 135 participates in L-citrulline binding. ATP is bound at residue aspartate 136. 2 residues coordinate L-citrulline: arginine 139 and serine 192. Residue aspartate 194 coordinates ATP. Residues threonine 201, glutamate 203, and glutamate 280 each contribute to the L-citrulline site.

Belongs to the argininosuccinate synthase family. Type 2 subfamily. As to quaternary structure, homotetramer.

It is found in the cytoplasm. It carries out the reaction L-citrulline + L-aspartate + ATP = 2-(N(omega)-L-arginino)succinate + AMP + diphosphate + H(+). It participates in amino-acid biosynthesis; L-arginine biosynthesis; L-arginine from L-ornithine and carbamoyl phosphate: step 2/3. This chain is Argininosuccinate synthase, found in Rhodopseudomonas palustris (strain BisB18).